A 762-amino-acid chain; its full sequence is Xaa-Pro dipeptidyl-peptidase (762 aa).

Catalysis depends on charge relay system residues serine 349, aspartate 469, and histidine 499.

It belongs to the peptidase S15 family. Homodimer.

It is found in the cytoplasm. The enzyme catalyses Hydrolyzes Xaa-Pro-|- bonds to release unblocked, N-terminal dipeptides from substrates including Ala-Pro-|-p-nitroanilide and (sequentially) Tyr-Pro-|-Phe-Pro-|-Gly-Pro-|-Ile.. Its function is as follows. Removes N-terminal dipeptides sequentially from polypeptides having unsubstituted N-termini provided that the penultimate residue is proline. In Streptococcus sanguinis (strain SK36), this protein is Xaa-Pro dipeptidyl-peptidase.